Reading from the N-terminus, the 503-residue chain is Putative ribose/galactose/methyl galactoside import ATP-binding protein (503 aa).

ABC transporter domains follow at residues 7–244 (LEMI…VGRE) and 254–498 (VPIG…TGQL). Residue 39 to 46 (GENGAGKS) coordinates ATP.

This sequence belongs to the ABC transporter superfamily. Carbohydrate importer 2 (CUT2) (TC 3.A.1.2) family.

The protein resides in the cell membrane. It catalyses the reaction D-ribose(out) + ATP + H2O = D-ribose(in) + ADP + phosphate + H(+). It carries out the reaction D-galactose(out) + ATP + H2O = D-galactose(in) + ADP + phosphate + H(+). Functionally, part of an ABC transporter complex involved in carbohydrate import. Could be involved in ribose, galactose and/or methyl galactoside import. Responsible for energy coupling to the transport system. This chain is Putative ribose/galactose/methyl galactoside import ATP-binding protein, found in Geobacillus kaustophilus (strain HTA426).